Here is a 492-residue protein sequence, read N- to C-terminus: MDPYKNRPSSAFNSPFWTTNSGAPIWNNNSSLTVGSRGPILLEDYHLVEKLANFDRERIPERVVHARGASAKGFFEVTHDISHLTCADFLRAPGVQTPLIVRFSTVIHERGSPETLRDPRGFAVKFYTREGNFDLVGNNFPVFFVRDGLKFPDMVHALKPNPKSHIQENWRILDFFSHHPESLHMFSFLFDDVGIPQDYRHMDGFGVNTYTLINKAGKALYVKFHWKTTSGEKSLLDDEAIRVGGSNHSHATQDLYDSIAAGNYPEWKLYIQTLDPENEDRLDFDPLDVTKTWPEDVLPLQPVGRMVLNKNIDNFFAENEQLAFCPAIIVPGVYYSDDKLLQTRVFSYADTQRHRLGPNYLQLPANAPKCAHHNNHHDGFMNFMHRDEEVNYFPSRYDPVRHAEKVPVPPRILGGKREKCMIEKENNFKQPGERYRSWPSDRQERFVRRWVDALSDPRVTHEIRSIWISYWSQADRSLGQKIASHLNLKPSI.

Active-site residues include His-65 and Asn-138. Tyr-348 contacts heme.

It belongs to the catalase family. Homotetramer. Requires heme as cofactor.

Its subcellular location is the cytoplasm. It localises to the cytosol. The protein resides in the peroxisome matrix. It catalyses the reaction 2 H2O2 = O2 + 2 H2O. Functionally, catalyzes the degradation of hydrogen peroxide (H(2)O(2)) generated by peroxisomal oxidases to water and oxygen, thereby protecting cells from the toxic effects of hydrogen peroxide. In Glycine max (Soybean), this protein is Catalase-1/2 (CAT1).